A 434-amino-acid polypeptide reads, in one-letter code: CinA-like protein (434 aa).

The protein belongs to the CinA family.

In Mycobacterium avium (strain 104), this protein is CinA-like protein.